Here is a 234-residue protein sequence, read N- to C-terminus: Leucyl/phenylalanyl-tRNA--protein transferase (234 aa).

It belongs to the L/F-transferase family.

It is found in the cytoplasm. The catalysed reaction is N-terminal L-lysyl-[protein] + L-leucyl-tRNA(Leu) = N-terminal L-leucyl-L-lysyl-[protein] + tRNA(Leu) + H(+). The enzyme catalyses N-terminal L-arginyl-[protein] + L-leucyl-tRNA(Leu) = N-terminal L-leucyl-L-arginyl-[protein] + tRNA(Leu) + H(+). It carries out the reaction L-phenylalanyl-tRNA(Phe) + an N-terminal L-alpha-aminoacyl-[protein] = an N-terminal L-phenylalanyl-L-alpha-aminoacyl-[protein] + tRNA(Phe). In terms of biological role, functions in the N-end rule pathway of protein degradation where it conjugates Leu, Phe and, less efficiently, Met from aminoacyl-tRNAs to the N-termini of proteins containing an N-terminal arginine or lysine. The protein is Leucyl/phenylalanyl-tRNA--protein transferase of Salmonella gallinarum (strain 287/91 / NCTC 13346).